A 505-amino-acid polypeptide reads, in one-letter code: Maturase K (505 aa).

It belongs to the intron maturase 2 family. MatK subfamily.

The protein resides in the plastid. It is found in the chloroplast. Its function is as follows. Usually encoded in the trnK tRNA gene intron. Probably assists in splicing its own and other chloroplast group II introns. The polypeptide is Maturase K (Froelichia floridana (Florida snake-cotton)).